A 232-amino-acid chain; its full sequence is Cobalt transport protein CbiM (232 aa).

The next 6 helical transmembrane spans lie at 6–26 (GFLPPAHAIAWGVASAPFVVH), 43–63 (LLLGASGAFTFVLSALKLPSV), 84–104 (IMAVLGTITLLFQALLLAHGG), 107–127 (TLGANVFSMAIVGPWAGYGVY), 135–155 (VPLMVTVFFGAFVADLSTYCV), and 181–201 (IFAVTQIPLAVSEGLLTVIVM).

Belongs to the CbiM family. As to quaternary structure, forms an energy-coupling factor (ECF) transporter complex composed of an ATP-binding protein (A component, CbiO), a transmembrane protein (T component, CbiQ) and 2 possible substrate-capture proteins (S components, CbiM and CbiN) of unknown stoichimetry.

Its subcellular location is the cell membrane. It participates in cofactor biosynthesis; adenosylcobalamin biosynthesis. Its function is as follows. Part of the energy-coupling factor (ECF) transporter complex CbiMNOQ involved in cobalt import. The protein is Cobalt transport protein CbiM of Streptomyces coelicolor (strain ATCC BAA-471 / A3(2) / M145).